Here is a 348-residue protein sequence, read N- to C-terminus: Rhodopsin (348 aa).

Methionine 1 is modified (N-acetylmethionine). The Extracellular segment spans residues 1-36; sequence MNGTEGPNFYVPYSNKSGVVRSPYEEPQYYLAEPWM. N-linked (GlcNAc...) asparagine glycans are attached at residues asparagine 2 and asparagine 15. A helical membrane pass occupies residues 37–61; sequence FSCLAAYMFMLIVLGFPINFLTLYV. At 62 to 73 the chain is on the cytoplasmic side; that stretch reads TIQHKKLRTPLN. A helical membrane pass occupies residues 74-96; sequence YILLNLAVADLFMVICGFTTTLV. The Extracellular portion of the chain corresponds to 97 to 110; that stretch reads TSLNGYFVFGTTGC. The cysteines at positions 110 and 187 are disulfide-linked. The helical transmembrane segment at 111 to 133 threads the bilayer; the sequence is LVEGFFATTGGEVALWALVVLAI. Positions 134 to 136 match the 'Ionic lock' involved in activated form stabilization motif; the sequence is ERY. Over 134–152 the chain is Cytoplasmic; the sequence is ERYIVVCKPMSNFRFGENH. Residues 153–173 form a helical membrane-spanning segment; that stretch reads AIMGVAFTWIMALACSVPPIF. At 174–202 the chain is on the extracellular side; it reads GWSRYIPEGMQCSCGIDYYTLNPEFNNES. Residue glutamate 201 participates in Zn(2+) binding. A helical transmembrane segment spans residues 203–224; sequence FVIYMFVVHFIIPLTVIFFCYG. Topologically, residues 225 to 252 are cytoplasmic; that stretch reads QLVFTVKEAAAQQQESATTQKAEKEVTR. A helical transmembrane segment spans residues 253–274; it reads MVIIMVIAFLICWVPYASVAFY. Residues 275–286 are Extracellular-facing; the sequence is IFTHQGSDFGPI. Glutamine 279 contacts Zn(2+). Residues 287 to 308 traverse the membrane as a helical segment; it reads FMTLPAFFAKSSSIYNPVIYIM. Lysine 296 is modified (N6-(retinylidene)lysine). The Cytoplasmic portion of the chain corresponds to 309–348; that stretch reads MNKQFRNCMITTLCCGKNPLGDDEASTTASKTETSQVAPA. S-palmitoyl cysteine attachment occurs at residues cysteine 322 and cysteine 323. An interaction with SAG region spans residues 330–348; the sequence is DDEASTTASKTETSQVAPA. A Phosphoserine modification is found at serine 334. 2 positions are modified to phosphothreonine: threonine 335 and threonine 336. The residue at position 338 (serine 338) is a Phosphoserine. Phosphothreonine occurs at positions 340 and 342. A Phosphoserine modification is found at serine 343.

Belongs to the G-protein coupled receptor 1 family. Opsin subfamily. As to quaternary structure, homodimer. May form a complex composed of RHO, GRK1 and RCVRN in a Ca(2+)-dependent manner; RCVRN prevents the interaction between GRK1 and RHO. Interacts with GRK1. Interacts (phosphorylated form) with SAG. Interacts with GNAT1. Interacts with GNAT3. SAG and G-proteins compete for a common binding site. Interacts with PRCD; the interaction promotes PRCD stability. Forms a complex with ASAP1 and ARF4. Forms a complex with ASAP1, RAB11A, Rabin8/RAB3IP, ARF4 and RAB11FIP3; the complex regulates Golgi-to-cilia rhodopsin/RHO transport in photoreceptors. Phosphorylated on some or all of the serine and threonine residues present in the C-terminal region. In terms of processing, contains one covalently linked retinal chromophore. Upon light absorption, the covalently bound 11-cis-retinal is converted to all-trans-retinal. After hydrolysis of the Schiff base and release of the covalently bound all-trans-retinal, active rhodopsin is regenerated by binding of a fresh molecule of 11-cis-retinal.

The protein resides in the membrane. It localises to the cell projection. It is found in the cilium. The protein localises to the photoreceptor outer segment. Functionally, photoreceptor required for image-forming vision at low light intensity. Required for photoreceptor cell viability after birth. Light-induced isomerization of 11-cis to all-trans retinal triggers a conformational change that activates signaling via G-proteins. Subsequent receptor phosphorylation mediates displacement of the bound G-protein alpha subunit by the arrestin SAG and terminates signaling. This is Rhodopsin (RHO) from Sminthopsis crassicaudata (Fat-tailed dunnart).